Reading from the N-terminus, the 185-residue chain is MMKFLLILIFLASFSFSLTPEEEKQLLKDIAEIKTTLKAFIREADERFEQVDKRFEDVNRRFEDFNRRLNDLREDMNKRFELVDKRFIELREDMNKRFELVDQRFEQLYTFLWIITGIFTTLTASVIAFAWWDRRTIIRKTKEETFEEMEKELKPEKFRKIMNALREKAKTDKELEAILKKYGLL.

2 consecutive transmembrane segments (helical) span residues 1-21 (MMKF…LTPE) and 111-131 (FLWI…AFAW).

It to A.aeolicus aq_1900.

It is found in the cell membrane. This is an uncharacterized protein from Aquifex aeolicus (strain VF5).